Reading from the N-terminus, the 125-residue chain is MENQPTRNTRSRKLRNKLKTSLLMSTGSVTSLIQSKDNWVDYLYACQPLNRELVRTAIELIDSSEMSPAYRLALAESIRVYPSWVTESMLQNSELASWIQSRIISLSEHQDWKLKYQPLLMTLDH.

This sequence belongs to the orthoreovirus sigma-1s protein family.

The sequence is that of Protein sigma-1-small (S1) from Mammalia (T2J).